Reading from the N-terminus, the 232-residue chain is Histone H1.X (232 aa).

In terms of domain architecture, H15 spans 36–112 (HHPSYMDMIK…GATGSFRMGK (77 aa)). The tract at residues 142–232 (ISKAEKTKPS…LRTGTRKSYC (91 aa)) is disordered. Basic residues predominate over residues 159–197 (KKGKPISTMKKRGVMSKKRSSKNKMAPKAKSHGLKKKGP).

It belongs to the histone H1/H5 family.

It is found in the nucleus. The protein resides in the chromosome. The polypeptide is Histone H1.X (hil-1) (Caenorhabditis elegans).